The following is a 1162-amino-acid chain: Topoisomerase 1-associated factor 1 (1162 aa).

Disordered stretches follow at residues 977-1017 (TEGR…EANA) and 1127-1162 (TQVV…DTEY). Over residues 993-1003 (QRSKGKRKAIA) the composition is skewed to basic residues.

It belongs to the timeless family. Component of the fork protection complex (FPC) consisting of TOF1 and CSM3.

The protein localises to the nucleus. In terms of biological role, forms a fork protection complex (FPC) with CSM3 and which is required for chromosome segregation during meiosis and DNA damage repair. FPC coordinates leading and lagging strand synthesis and moves with the replication fork. FPC stabilizes replication forks in a configuration that is recognized by replication checkpoint sensors. The sequence is that of Topoisomerase 1-associated factor 1 (TOF1) from Kluyveromyces lactis (strain ATCC 8585 / CBS 2359 / DSM 70799 / NBRC 1267 / NRRL Y-1140 / WM37) (Yeast).